A 580-amino-acid chain; its full sequence is Bifunctional lycopene cyclase/phytoene synthase (580 aa).

3 helical membrane-spanning segments follow: residues 3 to 23, 35 to 55, and 65 to 85; these read WEYAQVHLKYTIPFGVVLAAV, KLVFLITVAVVSTIPWDSYLI, and GVVVGLTAWDIPAEELFFFVI. N-linked (GlcNAc...) asparagine glycosylation occurs at asparagine 89. The next 4 helical transmembrane spans lie at 116 to 136, 139 to 159, 171 to 191, and 214 to 234; these read IAGQILFASAIIFGLVSVSSG, GMYMGLILIWACPFLLFLWSI, NTALPIALPTLYLWVVDTFAL, and IEEAVFFLLTNTLIVFGLIAC.

This sequence in the N-terminal section; belongs to the lycopene beta-cyclase family. The protein in the C-terminal section; belongs to the phytoene/squalene synthase family.

It localises to the membrane. The enzyme catalyses all-trans-lycopene = gamma-carotene. It carries out the reaction gamma-carotene = all-trans-beta-carotene. The catalysed reaction is 2 (2E,6E,10E)-geranylgeranyl diphosphate = 15-cis-phytoene + 2 diphosphate. It participates in carotenoid biosynthesis; beta-carotene biosynthesis. Its pathway is carotenoid biosynthesis; phytoene biosynthesis; all-trans-phytoene from geranylgeranyl diphosphate: step 1/1. Functionally, bifunctional enzyme; part of the car gene cluster that mediates the biosynthesis of neurosporaxanthin, a carboxylic apocarotenoid acting as an essential protective pigments and leading to orange pigmentation. CarAR catalyzes the first step of the pathway by converting geranylgeranyl diphosphate to phytoene, as well as the later cyclization step that transforms the carB product lycopene into gamma-carotene. CarAR also converts part of gamma-carotene into beta-carotene. Neurosporaxanthin is synthesized from geranyl-geranyl pyrophosphate (GGPP) through several enzymatic activities. Phytoene synthase activity performed by the bifunctional enzyme carAR first produces phytoene from geranyl-geranyl pyrophosphate (GGPP). The phytoene dehydrogenase carB then introduces 4 desaturations to lead to lycopene which is substrate of the carotene cyclase activity of carAR that leads to the production of gamma-carotene. CarB then performs a 5th desaturation reaction to yield torulene. Torulene is the substrate of the dioxidase carT that breaks the molecule, removing five carbon atoms to yield beta-apo-4'-carotenal, whereas the aldehyde dehydrogenase carD mediates the last step by converting beta-apo-4'-carotenal into neurosporaxanthin. This Gibberella fujikuroi (strain CBS 195.34 / IMI 58289 / NRRL A-6831) (Bakanae and foot rot disease fungus) protein is Bifunctional lycopene cyclase/phytoene synthase.